A 451-amino-acid polypeptide reads, in one-letter code: AAA-ATPase At3g50940 (451 aa).

The signal sequence occupies residues 1–25 (MSSSSESHLATAKTALTAVASVAAA). 254–261 (GPPGTGKS) is an ATP binding site.

This sequence belongs to the AAA ATPase family. BCS1 subfamily. Mg(2+) is required as a cofactor.

It catalyses the reaction ATP + H2O = ADP + phosphate + H(+). The chain is AAA-ATPase At3g50940 from Arabidopsis thaliana (Mouse-ear cress).